The following is a 240-amino-acid chain: Probable transcriptional regulatory protein A2cp1_1765 (240 aa).

This sequence belongs to the TACO1 family.

It is found in the cytoplasm. This is Probable transcriptional regulatory protein A2cp1_1765 from Anaeromyxobacter dehalogenans (strain 2CP-1 / ATCC BAA-258).